A 134-amino-acid chain; its full sequence is MSAQSLEVGQKARLSKRFGAAEVAAFAALSEDFNPLHLDPAFAATTAFERPIVHGMLLASLFSGLLGQQLPGKGSIYLGQSLSFKLPVFVGDEVTAEVEVTALREDKPIATLTTRIFTQGGALAVTGEAVVKLP.

The MaoC-like domain occupies 5-119 (SLEVGQKARL…ATLTTRIFTQ (115 aa)). A (3R)-3-hydroxyacyl-CoA is bound by residues 32 to 37 (DFNPLH), glycine 55, and phenylalanine 84.

Homodimer.

The enzyme catalyses a (3R)-3-hydroxyacyl-CoA = a (2E)-enoyl-CoA + H2O. In terms of biological role, catalyzes the hydration of trans-2-enoyl-CoA with a chain-length of 4-6 carbon atoms, forming the corresponding (3R)-3-hydroxyacyl-CoA. The polypeptide is (R)-specific enoyl-CoA hydratase (phaJ) (Aeromonas caviae (Aeromonas punctata)).